Reading from the N-terminus, the 427-residue chain is D-inositol 3-phosphate glycosyltransferase (427 aa).

Histidine 12 contacts 1D-myo-inositol 3-phosphate. Residues 18–19 (QP) and glycine 26 each bind UDP-N-acetyl-alpha-D-glucosamine. Residues 23–28 (DAGGMN), lysine 81, tyrosine 113, threonine 137, and arginine 157 each bind 1D-myo-inositol 3-phosphate. UDP-N-acetyl-alpha-D-glucosamine is bound by residues arginine 234, lysine 239, and arginine 297. Residues tyrosine 306, glutamine 307, and alanine 309 each contribute to the Mg(2+) site. UDP-N-acetyl-alpha-D-glucosamine-binding residues include glutamate 319 and glutamate 327. Threonine 333 serves as a coordination point for Mg(2+).

This sequence belongs to the glycosyltransferase group 1 family. MshA subfamily. Homodimer.

It carries out the reaction 1D-myo-inositol 3-phosphate + UDP-N-acetyl-alpha-D-glucosamine = 1D-myo-inositol 2-acetamido-2-deoxy-alpha-D-glucopyranoside 3-phosphate + UDP + H(+). Catalyzes the transfer of a N-acetyl-glucosamine moiety to 1D-myo-inositol 3-phosphate to produce 1D-myo-inositol 2-acetamido-2-deoxy-glucopyranoside 3-phosphate in the mycothiol biosynthesis pathway. This chain is D-inositol 3-phosphate glycosyltransferase, found in Corynebacterium diphtheriae (strain ATCC 700971 / NCTC 13129 / Biotype gravis).